Consider the following 541-residue polypeptide: ATP synthase subunit beta (541 aa).

A disordered region spans residues 1-65 (MAKAVTSSKG…TPVKKEERAK (65 aa)). Basic and acidic residues-rich tracts occupy residues 25–36 (VKKDASKSKDAS) and 52–65 (AAKDTPVKKEERAK). 214–221 (GGAGVGKT) lines the ATP pocket.

Belongs to the ATPase alpha/beta chains family. In terms of assembly, F-type ATPases have 2 components, CF(1) - the catalytic core - and CF(0) - the membrane proton channel. CF(1) has five subunits: alpha(3), beta(3), gamma(1), delta(1), epsilon(1). CF(0) has three main subunits: a(1), b(2) and c(9-12). The alpha and beta chains form an alternating ring which encloses part of the gamma chain. CF(1) is attached to CF(0) by a central stalk formed by the gamma and epsilon chains, while a peripheral stalk is formed by the delta and b chains.

The protein resides in the cell inner membrane. It catalyses the reaction ATP + H2O + 4 H(+)(in) = ADP + phosphate + 5 H(+)(out). Functionally, produces ATP from ADP in the presence of a proton gradient across the membrane. The catalytic sites are hosted primarily by the beta subunits. The protein is ATP synthase subunit beta of Bartonella tribocorum (strain CIP 105476 / IBS 506).